A 122-amino-acid chain; its full sequence is Large ribosomal subunit protein uL14 (122 aa).

Belongs to the universal ribosomal protein uL14 family. In terms of assembly, part of the 50S ribosomal subunit. Forms a cluster with proteins L3 and L19. In the 70S ribosome, L14 and L19 interact and together make contacts with the 16S rRNA in bridges B5 and B8.

Functionally, binds to 23S rRNA. Forms part of two intersubunit bridges in the 70S ribosome. This Moorella thermoacetica (strain ATCC 39073 / JCM 9320) protein is Large ribosomal subunit protein uL14.